The following is a 429-amino-acid chain: Histidine--tRNA ligase (429 aa).

The protein belongs to the class-II aminoacyl-tRNA synthetase family. Homodimer.

It localises to the cytoplasm. It catalyses the reaction tRNA(His) + L-histidine + ATP = L-histidyl-tRNA(His) + AMP + diphosphate + H(+). This is Histidine--tRNA ligase from Pelodictyon phaeoclathratiforme (strain DSM 5477 / BU-1).